A 268-amino-acid polypeptide reads, in one-letter code: Undecaprenyl-diphosphatase 1 (268 aa).

7 helical membrane-spanning segments follow: residues 5–25 (TIVEALLLGLLEGLTEFIPVS), 43–63 (GKAFEILIQLGAILAILSVYF), 81–101 (HFVIGILIAFLPAAIIGALAH), 107–127 (VLFESPRLICTMLIIGGVILL), 185–205 (AEFSFFLAIPTMVGAFAFDLF), 214–234 (ADLPIIAIGFVAAFVTALFVV), and 248–268 (LFGWWRLVVGIVGLVALMIWG).

It belongs to the UppP family.

Its subcellular location is the cell inner membrane. It carries out the reaction di-trans,octa-cis-undecaprenyl diphosphate + H2O = di-trans,octa-cis-undecaprenyl phosphate + phosphate + H(+). In terms of biological role, catalyzes the dephosphorylation of undecaprenyl diphosphate (UPP). Confers resistance to bacitracin. The sequence is that of Undecaprenyl-diphosphatase 1 from Mesorhizobium japonicum (strain LMG 29417 / CECT 9101 / MAFF 303099) (Mesorhizobium loti (strain MAFF 303099)).